Reading from the N-terminus, the 288-residue chain is Large ribosomal subunit protein uL2 (288 aa).

Disordered stretches follow at residues 1 to 46 (MAIH…RNVY) and 226 to 288 (MVMN…RGKK). The segment covering 235 to 248 (NGGGQGKSKGGGGR) has biased composition (gly residues). A compositionally biased stretch (basic residues) spans 279-288 (HNGRKPRGKK).

Belongs to the universal ribosomal protein uL2 family. As to quaternary structure, part of the 50S ribosomal subunit. Forms a bridge to the 30S subunit in the 70S ribosome.

Its function is as follows. One of the primary rRNA binding proteins. Required for association of the 30S and 50S subunits to form the 70S ribosome, for tRNA binding and peptide bond formation. It has been suggested to have peptidyltransferase activity; this is somewhat controversial. Makes several contacts with the 16S rRNA in the 70S ribosome. The sequence is that of Large ribosomal subunit protein uL2 from Opitutus terrae (strain DSM 11246 / JCM 15787 / PB90-1).